The sequence spans 121 residues: Large ribosomal subunit protein uL18 (121 aa).

It belongs to the universal ribosomal protein uL18 family. In terms of assembly, part of the 50S ribosomal subunit; part of the 5S rRNA/L5/L18/L25 subcomplex. Contacts the 5S and 23S rRNAs.

This is one of the proteins that bind and probably mediate the attachment of the 5S RNA into the large ribosomal subunit, where it forms part of the central protuberance. This is Large ribosomal subunit protein uL18 from Bdellovibrio bacteriovorus (strain ATCC 15356 / DSM 50701 / NCIMB 9529 / HD100).